A 420-amino-acid polypeptide reads, in one-letter code: RING finger protein 39 (420 aa).

The RING-type zinc-finger motif lies at 88-135 (CPLCGGSFEDPVLLACEHSFCRACLARRWGTPPATGTEASPTACPCCG). In terms of domain architecture, B30.2/SPRY spans 210 to 420 (DDLPEDYPVV…APLRIVPAES (211 aa)). The segment at 246–265 (DRRSVQLAPPGTPAPPDGPK) is disordered.

The protein localises to the cytoplasm. It carries out the reaction S-ubiquitinyl-[E2 ubiquitin-conjugating enzyme]-L-cysteine + [acceptor protein]-L-lysine = [E2 ubiquitin-conjugating enzyme]-L-cysteine + N(6)-ubiquitinyl-[acceptor protein]-L-lysine.. It participates in protein modification; protein ubiquitination. Its function is as follows. Plays an inhibitory role in anti-RNA viral innate immunity by targeting the adapter DDX3X and promoting its 'Lys-48'-linked polyubiquitination. Alternatively, enhances the cGAS-STING pathway activation by promoting 'Lys-63'-linked ubiquitination of STING1, facilitating the STING1-TBK1 complex formation and STING1 activation. This Pan troglodytes (Chimpanzee) protein is RING finger protein 39 (RNF39).